A 341-amino-acid polypeptide reads, in one-letter code: Radial spoke head 14 homolog (341 aa).

ARM repeat units lie at residues 16–55 (PTKAAIAYGCRALSKLNEELQSRDLLTRQKALVALCDLMH), 57–96 (PEYVYEAINIGCLESLKTLLQDDDNLVRIKTTEVLYIMAT), 99–138 (VGRVGFLKHDIIQALSLLLSDHQTLCRENLHQAYKHLAQL), 139–178 (PKGAQGIVQSGLIPSLVRKLQKEEDHIQEIILDTLALCLQ), 180–217 (DATEALESQAVPCLKEKLLSQNSEIRSKAARALIAISI), 219–258 (LDGKNQVWKNKVIPILVTLLSDTDEEVKANAAGALMHATV), 260–300 (TEGK…MLAE), and 302–339 (PEGRKLLLSHVPIFRYLLAHKNEAIQRAAEVAIKVIEW).

This sequence belongs to the flagellar radial spoke RSP14 family. As to quaternary structure, component of the axonemal radial spoke complex 1 (RS1), at least composed of spoke head proteins RSPH1, RSPH3, RSPH9 and the cilia-specific component RSPH4A or sperm-specific component RSPH6A, spoke stalk proteins RSPH14, DNAJB13, DYDC1, ROPN1L and NME5, and the anchor protein IQUB.

It is found in the cytoplasm. The protein resides in the cytoskeleton. Its subcellular location is the flagellum axoneme. In terms of biological role, functions as part of axonemal radial spoke complexes that play an important part in the motility of sperm and cilia. The sequence is that of Radial spoke head 14 homolog from Mus musculus (Mouse).